An 819-amino-acid polypeptide reads, in one-letter code: Protein kinase C-binding protein NELL2 (819 aa).

The signal sequence occupies residues 1–24 (MHAMESRVLLRTFCVILGLEAVWG). N-linked (GlcNAc...) asparagine glycosylation is found at N56, N228, N296, and N301. The Laminin G-like domain occupies 58–231 (TKAFLFQDSP…AQCPDLNRTC (174 aa)). A VWFC 1 domain is found at 275–334 (RTCTMKGTTYREFESWTDGCKNCTCLNGTIQCETLVCPAPDCPAKSAPAYVDGKCCKECK). Positions 400 to 442 (GYDFCSEKHTCMENSVCRNLNDRAVCSCRDGFRALREDNAYCE) constitute an EGF-like 1 domain. Intrachain disulfides connect C404–C416, C410–C425, and C427–C441. The Ca(2+) site is built by D443, I444, and E446. An EGF-like 2; calcium-binding domain is found at 443–484 (DIDECAEGRHYCRENTMCVNTPGSFLCICQTGYIRIDDYSCT). 9 cysteine pairs are disulfide-bonded: C447/C460, C454/C469, C471/C483, C489/C502, C496/C511, C513/C524, C528/C538, C532/C544, and C546/C555. Residues N462, T463, and S466 each contribute to the Ca(2+) site. The 41-residue stretch at 485-525 (EHDECLTNQHNCDENALCFNTVGGHNCVCKPGYTGNGTTCK) folds into the EGF-like 3; calcium-binding domain. An N-linked (GlcNAc...) asparagine glycan is attached at N520. The region spanning 526–556 (AFCKDGCRNGGACIAANVCACPQGFTGPSCE) is the EGF-like 4 domain. Residue T551 is glycosylated (O-linked (GlcNAc...) threonine). Residues D558, I559, and E561 each contribute to the Ca(2+) site. The 47-residue stretch at 558–604 (DIDECSEGFVQCDSRANCINLPGWYHCECRDGYHDNGMFAPGGESCE) folds into the EGF-like 5; calcium-binding domain. 3 disulfides stabilise this stretch: C562–C575, C569–C584, and C586–C603. Ca(2+) contacts are provided by N577, L578, and W581. Residues D605, I606, and E608 each contribute to the Ca(2+) site. An EGF-like 6; calcium-binding domain is found at 605–640 (DIDECGTGRHSCANDTICFNLDGGYDCRCPHGKNCT). 3 disulfide bridges follow: C609–C622, C616–C631, and C633–C639. N618 is a glycosylation site (N-linked (GlcNAc...) asparagine). N624, L625, and G628 together coordinate Ca(2+). N638 carries N-linked (GlcNAc...) asparagine glycosylation. 2 VWFC domains span residues 641-696 (GDCV…PECD) and 701-759 (SQCL…PRCV).

Homotrimer. Binds to PRKCB. Interacts with NICOL1; this interaction triggers epididymal differentiation. In terms of assembly, binds to PRKCB. As to expression, widely expressed. Expressed in cortical astrocytes but not in neuron. Widely expressed in brain. High expression is observed in telencephalic and diencephalic glutamatergic neurons, while no expression is found in GABAergic and GNRH neurons.

Its subcellular location is the secreted. It localises to the cytoplasm. Its function is as follows. Plays multiple roles In neural tissues, regulates neuronal proliferation, survival, differentiation, polarization, as well as axon guidance and synaptic functions. Plays an important role in axon development during neuronal differentiation through the MAPK intracellular signaling pathway. Via binding to its receptor ROBO3, plays a role in axon guidance, functioning as a repulsive axon guidance cue that contributes to commissural axon guidance to the midline. Required for neuron survival through the modulation of MAPK signaling pathways too. Involved in the regulation of hypothalamic GNRH secretion and the control of puberty. Functionally, epididymal-secreted protein that signals through a ROS1-pathway to regulate the epididymal initial segment (IS) maturation, sperm maturation and male fertility. Acts as an endogenous inhibitor of PRKCB in glia. This chain is Protein kinase C-binding protein NELL2 (Nell2), found in Rattus norvegicus (Rat).